A 435-amino-acid polypeptide reads, in one-letter code: Methylenetetrahydrofolate--tRNA-(uracil-5-)-methyltransferase TrmFO (435 aa).

9–14 contacts FAD; sequence GAGLAG.

Belongs to the MnmG family. TrmFO subfamily. It depends on FAD as a cofactor.

Its subcellular location is the cytoplasm. It carries out the reaction uridine(54) in tRNA + (6R)-5,10-methylene-5,6,7,8-tetrahydrofolate + NADH + H(+) = 5-methyluridine(54) in tRNA + (6S)-5,6,7,8-tetrahydrofolate + NAD(+). The enzyme catalyses uridine(54) in tRNA + (6R)-5,10-methylene-5,6,7,8-tetrahydrofolate + NADPH + H(+) = 5-methyluridine(54) in tRNA + (6S)-5,6,7,8-tetrahydrofolate + NADP(+). Functionally, catalyzes the folate-dependent formation of 5-methyl-uridine at position 54 (M-5-U54) in all tRNAs. In Staphylococcus saprophyticus subsp. saprophyticus (strain ATCC 15305 / DSM 20229 / NCIMB 8711 / NCTC 7292 / S-41), this protein is Methylenetetrahydrofolate--tRNA-(uracil-5-)-methyltransferase TrmFO.